Here is a 397-residue protein sequence, read N- to C-terminus: Serpin B10 (397 aa).

The Nuclear localization signal motif lies at 74 to 77 (KKRK).

It belongs to the serpin family. Ov-serpin subfamily.

It localises to the nucleus. The protein resides in the cytoplasm. In terms of biological role, protease inhibitor that may play a role in the regulation of protease activities during hematopoiesis and apoptosis induced by TNF. May regulate protease activities in the cytoplasm and in the nucleus. The protein is Serpin B10 (SERPINB10) of Plecturocebus moloch (Dusky titi monkey).